The sequence spans 598 residues: Major royal jelly protein 5 (598 aa).

The first 17 residues, 1 to 17, serve as a signal peptide directing secretion; sequence MTTWLLLVVCLGIACQG. 4 N-linked (GlcNAc...) asparagine glycosylation sites follow: N148, N164, N181, and N324.

This sequence belongs to the major royal jelly protein family. As to expression, found in and secreted from the hypopharyngeal glands of the worker honey bee (at protein level); expression peaks at 8 days post eclosion. Expressed in the brains of adult worker bees peaking at 12 days post eclosion (at protein level). Expressed in the spermatheca of adult queen bees (at protein level); Expression levels are higher in mated queens than in virgin queens. Expressed in the heads of worker bees after eclosion, expression dropping with age and detectable up to 26 days of age.

Its subcellular location is the secreted. Its function is as follows. Component of royal jelly, a substance produced in the hypopharyngeal gland containing proteins, free amino acids, fatty acids, sugars and other nutrients, which is fed to developing larvae by worker nurse bees. Major royal jelly proteins (MRJPs) are high in essential amino acids and probably have a nutritional function in larval food. All larvae are fed some royal jelly (also known as worker jelly) early in their development but it forms the principal source of nutrition for larvae destined to become queen bees. Produced in the spermatheca of adult queen bees, along with other major royal jelly proteins, where it may act as a nutrient supply for sperm stored by mated queens, or be involved in energy metabolism. This Apis mellifera (Honeybee) protein is Major royal jelly protein 5.